A 48-amino-acid polypeptide reads, in one-letter code: Large ribosomal subunit protein bL33A (48 aa).

Belongs to the bacterial ribosomal protein bL33 family.

The protein is Large ribosomal subunit protein bL33A of Bacillus mycoides (strain KBAB4) (Bacillus weihenstephanensis).